Here is a 113-residue protein sequence, read N- to C-terminus: UPF0122 protein M6_Spy0905 (113 aa).

This sequence belongs to the UPF0122 family.

Might take part in the signal recognition particle (SRP) pathway. This is inferred from the conservation of its genetic proximity to ftsY/ffh. May be a regulatory protein. The chain is UPF0122 protein M6_Spy0905 from Streptococcus pyogenes serotype M6 (strain ATCC BAA-946 / MGAS10394).